The sequence spans 413 residues: S-adenosylmethionine synthase (413 aa).

His-15 contacts ATP. Asp-17 serves as a coordination point for Mg(2+). Glu-43 contacts K(+). Residues Glu-56 and Gln-100 each contribute to the L-methionine site. The tract at residues 100–110 (QSPDISQGVNE) is flexible loop. ATP contacts are provided by residues 171-173 (DGK), 248-249 (KF), Asp-257, 263-264 (RK), Ala-280, and Lys-284. Asp-257 is an L-methionine binding site. L-methionine is bound at residue Lys-288.

This sequence belongs to the AdoMet synthase family. As to quaternary structure, homotetramer; dimer of dimers. Mg(2+) serves as cofactor. It depends on K(+) as a cofactor.

The protein resides in the cytoplasm. The catalysed reaction is L-methionine + ATP + H2O = S-adenosyl-L-methionine + phosphate + diphosphate. It participates in amino-acid biosynthesis; S-adenosyl-L-methionine biosynthesis; S-adenosyl-L-methionine from L-methionine: step 1/1. In terms of biological role, catalyzes the formation of S-adenosylmethionine (AdoMet) from methionine and ATP. The overall synthetic reaction is composed of two sequential steps, AdoMet formation and the subsequent tripolyphosphate hydrolysis which occurs prior to release of AdoMet from the enzyme. This is S-adenosylmethionine synthase from Prochlorococcus marinus (strain MIT 9515).